The primary structure comprises 398 residues: Lysophospholipid transporter LplT (398 aa).

The next 12 membrane-spanning stretches (helical) occupy residues 19–39 (VIVAQFLSAFGDNALLFATLA), 53–73 (VLQMVFVGAYILFAPFVGQIA), 96–116 (ICLGVNPFVGYTLVGIGAAAY), 139–159 (LMEASTIAAILLGSVAGGVLA), 164–184 (IAALVACTLAYAGAVVANLFI), 195–213 (SWQLAAMIRSFFCACVVLW), 227–247 (LFWGAGVTLRFLVVLWVPVAL), 257–277 (YLNAMVAVGIVVGAGAAAKLV), 281–301 (TVSRCMPAGILIGVVVAMFSL), 304–324 (ALLPAYALLLLIGILGGFFVV), 352–372 (NSTMLLMLGLYSLAVMVGVPA), and 373–393 (VATGIGFGVLFALAIAALWIW).

The protein belongs to the major facilitator superfamily. LplT (TC 2.A.1.42) family.

It is found in the cell inner membrane. Catalyzes the facilitated diffusion of 2-acyl-glycero-3-phosphoethanolamine (2-acyl-GPE) into the cell. This Salmonella arizonae (strain ATCC BAA-731 / CDC346-86 / RSK2980) protein is Lysophospholipid transporter LplT.